The primary structure comprises 232 residues: MKIGIIGAMEEEVTLLRDKIENRQTISLGGCEIYTGQLNGTEVALLKSGIGKVAAALGATLLLEHGKPDVIINTGSAGGLAPTLKVGDIVVSDEARYHDADVTAFGYEYGQLPGCPAGFKADDKLIAAAEACIAELNLNAVRGLIVSGDAFINGSVGLAKIRHNFPQAIAVEMEATAIAHVCHNFNVPFVVVRAISDVADQQSHLSFDEFLAVAAKQSSLMVESLVQKLAHG.

Glutamate 12 (proton acceptor) is an active-site residue. Substrate contacts are provided by residues glycine 78, isoleucine 152, and 173-174 (ME). Aspartate 197 serves as the catalytic Proton donor.

The protein belongs to the PNP/UDP phosphorylase family. MtnN subfamily. Homodimer.

The catalysed reaction is S-adenosyl-L-homocysteine + H2O = S-(5-deoxy-D-ribos-5-yl)-L-homocysteine + adenine. It carries out the reaction S-methyl-5'-thioadenosine + H2O = 5-(methylsulfanyl)-D-ribose + adenine. The enzyme catalyses 5'-deoxyadenosine + H2O = 5-deoxy-D-ribose + adenine. It participates in amino-acid biosynthesis; L-methionine biosynthesis via salvage pathway; S-methyl-5-thio-alpha-D-ribose 1-phosphate from S-methyl-5'-thioadenosine (hydrolase route): step 1/2. Its function is as follows. Catalyzes the irreversible cleavage of the glycosidic bond in both 5'-methylthioadenosine (MTA) and S-adenosylhomocysteine (SAH/AdoHcy) to adenine and the corresponding thioribose, 5'-methylthioribose and S-ribosylhomocysteine, respectively. Also cleaves 5'-deoxyadenosine, a toxic by-product of radical S-adenosylmethionine (SAM) enzymes, into 5-deoxyribose and adenine. Thus, is required for in vivo function of the radical SAM enzymes biotin synthase and lipoic acid synthase, that are inhibited by 5'-deoxyadenosine accumulation. The polypeptide is 5'-methylthioadenosine/S-adenosylhomocysteine nucleosidase (Shigella boydii serotype 4 (strain Sb227)).